The following is a 198-amino-acid chain: Recombination protein RecR (198 aa).

The segment at 58-73 adopts a C4-type zinc-finger fold; sequence CSTCGNFTDTDPCALC. The Toprim domain occupies 81 to 175; sequence STICVVEQPK…KVTRIAAGIP (95 aa).

It belongs to the RecR family.

Its function is as follows. May play a role in DNA repair. It seems to be involved in an RecBC-independent recombinational process of DNA repair. It may act with RecF and RecO. The protein is Recombination protein RecR of Clostridium botulinum (strain Alaska E43 / Type E3).